Reading from the N-terminus, the 433-residue chain is MGIIDEAKRGQITDEMRAISKLEGIPVEKVRNRISEGKIMLIRNAKYPSRKLVPIGKGLTTKVNVNIGTSSEVVDLDMELQKVKVANKWGDTLMDLSTGGDLDAIRRDIIKASDLPVGTVPVYQIFIESFKKKSGGAYFTEDELLNTVEKHLKDGVAFMTIHAGITKDLAIRALKSDRIIPIVSRGGDMIAGWMIHNNSENPYRKNWDYVLEMFKEYDAVISLGDALRPGATGDAHDEFQIGELLETARLVKSALQKGVQVMVEGPGHVPLNEIAWDVKLMKKLTGGVPYYVLGPLPIDVGAPYDHIASAIGAAISSASGVDLLCYLTPAEHLGLPTVKQVEEGAIAYRIAAHAGDVVKLGRKARKWDDEVSYYRGKLDWENMISKLIDPQRAYQVYTQFGTPKVKACTMCGGYCPMMWAMDQVRKIGSSSSL.

Substrate-binding positions include asparagine 66, methionine 94, tyrosine 123, histidine 162, 184–186 (SRG), 225–228 (DALR), and glutamate 264. Histidine 268 lines the Zn(2+) pocket. Substrate is bound at residue tyrosine 291. Histidine 332 contacts Zn(2+). [4Fe-4S] cluster-binding residues include cysteine 408, cysteine 411, and cysteine 415.

This sequence belongs to the ThiC family. It depends on [4Fe-4S] cluster as a cofactor.

It catalyses the reaction 5-amino-1-(5-phospho-beta-D-ribosyl)imidazole + S-adenosyl-L-methionine = 4-amino-2-methyl-5-(phosphooxymethyl)pyrimidine + CO + 5'-deoxyadenosine + formate + L-methionine + 3 H(+). It functions in the pathway cofactor biosynthesis; thiamine diphosphate biosynthesis. Catalyzes the synthesis of the hydroxymethylpyrimidine phosphate (HMP-P) moiety of thiamine from aminoimidazole ribotide (AIR) in a radical S-adenosyl-L-methionine (SAM)-dependent reaction. The sequence is that of Phosphomethylpyrimidine synthase 2 from Saccharolobus solfataricus (strain ATCC 35092 / DSM 1617 / JCM 11322 / P2) (Sulfolobus solfataricus).